A 317-amino-acid polypeptide reads, in one-letter code: Porphobilinogen deaminase (317 aa).

Cysteine 245 carries the post-translational modification S-(dipyrrolylmethanemethyl)cysteine.

The protein belongs to the HMBS family. In terms of assembly, monomer. It depends on dipyrromethane as a cofactor.

It catalyses the reaction 4 porphobilinogen + H2O = hydroxymethylbilane + 4 NH4(+). Its pathway is porphyrin-containing compound metabolism; protoporphyrin-IX biosynthesis; coproporphyrinogen-III from 5-aminolevulinate: step 2/4. It participates in porphyrin-containing compound metabolism; chlorophyll biosynthesis. Functionally, tetrapolymerization of the monopyrrole PBG into the hydroxymethylbilane pre-uroporphyrinogen in several discrete steps. The sequence is that of Porphobilinogen deaminase from Synechococcus sp. (strain RCC307).